Reading from the N-terminus, the 243-residue chain is tRNA pseudouridine synthase A (243 aa).

Residue D54 is the Nucleophile of the active site. A substrate-binding site is contributed by Y112.

The protein belongs to the tRNA pseudouridine synthase TruA family. In terms of assembly, homodimer.

The catalysed reaction is uridine(38/39/40) in tRNA = pseudouridine(38/39/40) in tRNA. In terms of biological role, formation of pseudouridine at positions 38, 39 and 40 in the anticodon stem and loop of transfer RNAs. This Aster yellows witches'-broom phytoplasma (strain AYWB) protein is tRNA pseudouridine synthase A.